Reading from the N-terminus, the 367-residue chain is Histidinol-phosphate aminotransferase (367 aa).

Position 225 is an N6-(pyridoxal phosphate)lysine (Lys225).

Belongs to the class-II pyridoxal-phosphate-dependent aminotransferase family. Histidinol-phosphate aminotransferase subfamily. As to quaternary structure, homodimer. Pyridoxal 5'-phosphate serves as cofactor.

It catalyses the reaction L-histidinol phosphate + 2-oxoglutarate = 3-(imidazol-4-yl)-2-oxopropyl phosphate + L-glutamate. It functions in the pathway amino-acid biosynthesis; L-histidine biosynthesis; L-histidine from 5-phospho-alpha-D-ribose 1-diphosphate: step 7/9. In Hyphomonas neptunium (strain ATCC 15444), this protein is Histidinol-phosphate aminotransferase.